A 305-amino-acid chain; its full sequence is MGGTLAWTLLLPLLLRESDSLEPSCTVSSADVDWNAEFSATCLNFSGLSLSLPHNQSLRASNVILLDLSGNGLRELPVTFFAHLQKLEVLNVLRNPLSRVDGALAARCDLDLQADCNCALESWHDIRRDNCSGQKPLLCWDTTSSQHNLSAFLEVSCAPGLASATIGAVVVSGCLLLGLAIAGPVLAWRLWRCRVARSRELNKPWAAQDGPKPGLGLQPRYGSRSAPKPQVAVPSCPSTPDYENMFVGQPAAEHQWDEQGAHPSEDNDFYINYKDIDLASQPVYCNLQSLGQAPMDEEEYVIPGH.

The N-terminal stretch at 1 to 20 (MGGTLAWTLLLPLLLRESDS) is a signal peptide. Over 21-165 (LEPSCTVSSA…SCAPGLASAT (145 aa)) the chain is Extracellular. LRR repeat units lie at residues 39-59 (SATC…QSLR), 62-83 (NVIL…FFAH), and 86-107 (KLEV…LAAR). Residues asparagine 44 and asparagine 55 are each glycosylated (N-linked (GlcNAc...) asparagine). 2 N-linked (GlcNAc...) asparagine glycosylation sites follow: asparagine 130 and asparagine 148. Residues 166–186 (IGAVVVSGCLLLGLAIAGPVL) traverse the membrane as a helical segment. Residues 187-305 (AWRLWRCRVA…DEEEYVIPGH (119 aa)) lie on the Cytoplasmic side of the membrane. The tract at residues 204–229 (PWAAQDGPKPGLGLQPRYGSRSAPKP) is disordered. Tyrosine 284 bears the Phosphotyrosine mark.

In terms of assembly, interacts with RIGI. Interacts with SQSTM1. Interacts with p65/RELA; this interaction promotes the degradation of RELA through autophagy. As to expression, expressed in plasmacytoid dendritic cells (PDC), monocyte-derived dendritic cells (MDDC), granulocytes, monocytes, B-lymphocytes, peripheral blood leukocytes, spleen, bone marrow, and, to a lesser extent, lymph nodes, fetal liver, and appendix but not in thymus.

It is found in the membrane. The protein resides in the cytoplasm. Its function is as follows. Plays a role in the inhibition of RLR-mediated type I interferon signaling pathway by targeting RIGI for autophagic degradation. Interacts specifically with ISG15-associated RIGI to promote interaction between RIGI and the autophagic cargo receptor p62/SQSTM1 to mediate RIGI degradation via selective autophagy. Also plays a role in the inhibition of NF-kappa-B signaling pathway and inflammatory response by promoting the degradation of p65/RELA. The chain is Leucine-rich repeat-containing protein 25 (LRRC25) from Homo sapiens (Human).